We begin with the raw amino-acid sequence, 361 residues long: UDP-N-acetylglucosamine--N-acetylmuramyl-(pentapeptide) pyrophosphoryl-undecaprenol N-acetylglucosamine transferase (361 aa).

Residues 11–13, asparagine 124, arginine 164, serine 192, and glutamine 295 contribute to the UDP-N-acetyl-alpha-D-glucosamine site; that span reads TGG.

The protein belongs to the glycosyltransferase 28 family. MurG subfamily.

The protein localises to the cell membrane. The enzyme catalyses di-trans,octa-cis-undecaprenyl diphospho-N-acetyl-alpha-D-muramoyl-L-alanyl-D-glutamyl-meso-2,6-diaminopimeloyl-D-alanyl-D-alanine + UDP-N-acetyl-alpha-D-glucosamine = di-trans,octa-cis-undecaprenyl diphospho-[N-acetyl-alpha-D-glucosaminyl-(1-&gt;4)]-N-acetyl-alpha-D-muramoyl-L-alanyl-D-glutamyl-meso-2,6-diaminopimeloyl-D-alanyl-D-alanine + UDP + H(+). The protein operates within cell wall biogenesis; peptidoglycan biosynthesis. Its function is as follows. Cell wall formation. Catalyzes the transfer of a GlcNAc subunit on undecaprenyl-pyrophosphoryl-MurNAc-pentapeptide (lipid intermediate I) to form undecaprenyl-pyrophosphoryl-MurNAc-(pentapeptide)GlcNAc (lipid intermediate II). This is UDP-N-acetylglucosamine--N-acetylmuramyl-(pentapeptide) pyrophosphoryl-undecaprenol N-acetylglucosamine transferase from Deinococcus geothermalis (strain DSM 11300 / CIP 105573 / AG-3a).